The chain runs to 1547 residues: Transposon Ty3-G Gag-Pol polyprotein (1547 aa).

Ser-2 carries the post-translational modification N-acetylserine. A CCHC-type zinc finger spans residues 265-282; it reads RLCFYCKKEGHRLNECRA. Asp-336 acts as the For protease activity; shared with dimeric partner in catalysis. The Reverse transcriptase domain maps to 620–797; that stretch reads LDNKFIVPSK…EETEFLGYSI (178 aa). 6 residues coordinate Mg(2+): Asp-686, Asp-748, Asp-749, Asp-893, Glu-936, and Asp-961. One can recognise an RNase H Ty3/gyspy-type domain in the interval 893–1011; the sequence is DASKDGIGAV…VADAISRAVY (119 aa). Positions 1106–1145 are integrase-type zinc finger-like; it reads HTLFGGHFGVTVTLAKISPIYYWPKLQHSIIQYIRTCVQC. Residues 1159 to 1324 enclose the Integrase catalytic domain; the sequence is LQPLPIAEGR…SPFEIDLGYL (166 aa). Residues Asp-1175 and Asp-1236 each contribute to the Mg(2+) site.

In terms of assembly, the protease is a homodimer, whose active site consists of two apposed aspartic acid residues. In terms of processing, initially, virus-like particles (VLPs) are composed of the structural unprocessed proteins Gag and Gag-Pol, and also contain the host initiator methionine tRNA (tRNA(i)-Met) which serves as a primer for minus-strand DNA synthesis, and a dimer of genomic Ty RNA. Processing of the polyproteins occurs within the particle and proceeds by an ordered pathway, called maturation. First, the protease (PR) is released by autocatalytic cleavage of the Gag-Pol polyprotein, and this cleavage is a prerequisite for subsequent processing at the remaining sites to release the mature structural and catalytic proteins. Maturation takes place prior to the RT reaction and is required to produce transposition-competent VLPs.

The protein localises to the cytoplasm. Its subcellular location is the nucleus. The catalysed reaction is DNA(n) + a 2'-deoxyribonucleoside 5'-triphosphate = DNA(n+1) + diphosphate. It carries out the reaction Endonucleolytic cleavage to 5'-phosphomonoester.. Its function is as follows. Capsid protein (CA) is the structural component of the virus-like particle (VLP), forming the shell that encapsulates the genomic RNA-nucleocapsid complex. Functionally, nucleocapsid protein p11 (NC) forms the nucleocore that coats the retro-elements dimeric RNA. Binds these RNAs through its zinc fingers. Promotes primer tRNA(i)-Met annealing to the multipartite primer-binding site (PBS), dimerization of Ty3 RNA and initiation of reverse transcription. In terms of biological role, the aspartyl protease (PR) mediates the proteolytic cleavages of the Gag and Gag-Pol polyproteins after assembly of the VLP. Reverse transcriptase/ribonuclease H (RT) is a multifunctional enzyme that catalyzes the conversion of the retro-elements RNA genome into dsDNA within the VLP. The enzyme displays a DNA polymerase activity that can copy either DNA or RNA templates, and a ribonuclease H (RNase H) activity that cleaves the RNA strand of RNA-DNA heteroduplexes during plus-strand synthesis and hydrolyzes RNA primers. The conversion leads to a linear dsDNA copy of the retrotransposon that includes long terminal repeats (LTRs) at both ends. Its function is as follows. Integrase (IN) targets the VLP to the nucleus, where a subparticle preintegration complex (PIC) containing at least integrase and the newly synthesized dsDNA copy of the retrotransposon must transit the nuclear membrane. Once in the nucleus, integrase performs the integration of the dsDNA into the host genome. The chain is Transposon Ty3-G Gag-Pol polyprotein (TY3B-G) from Saccharomyces cerevisiae (strain ATCC 204508 / S288c) (Baker's yeast).